Reading from the N-terminus, the 190-residue chain is Imidazoleglycerol-phosphate dehydratase (190 aa).

This sequence belongs to the imidazoleglycerol-phosphate dehydratase family.

Its subcellular location is the cytoplasm. The catalysed reaction is D-erythro-1-(imidazol-4-yl)glycerol 3-phosphate = 3-(imidazol-4-yl)-2-oxopropyl phosphate + H2O. The protein operates within amino-acid biosynthesis; L-histidine biosynthesis; L-histidine from 5-phospho-alpha-D-ribose 1-diphosphate: step 6/9. The protein is Imidazoleglycerol-phosphate dehydratase of Methanococcus maripaludis (strain C7 / ATCC BAA-1331).